We begin with the raw amino-acid sequence, 127 residues long: Glycine cleavage system H protein (127 aa).

Residues 22 to 104 form the Lipoyl-binding domain; the sequence is KVRIGITDFA…YEKAWMIVVE (83 aa). Residue K63 is modified to N6-lipoyllysine.

It belongs to the GcvH family. The glycine cleavage system is composed of four proteins: P, T, L and H. (R)-lipoate serves as cofactor.

The glycine cleavage system catalyzes the degradation of glycine. The H protein shuttles the methylamine group of glycine from the P protein to the T protein. Its function is as follows. Is also involved in protein lipoylation via its role as an octanoyl/lipoyl carrier protein intermediate. The polypeptide is Glycine cleavage system H protein (Bacillus licheniformis (strain ATCC 14580 / DSM 13 / JCM 2505 / CCUG 7422 / NBRC 12200 / NCIMB 9375 / NCTC 10341 / NRRL NRS-1264 / Gibson 46)).